The chain runs to 242 residues: Murein peptide amidase A (242 aa).

One can recognise a Peptidase M14 domain in the interval 1–234; it reads MTVTRPRAER…FAMANLLRWH (234 aa). Zn(2+)-binding residues include histidine 49, glutamate 52, and histidine 157. Glutamate 210 (proton donor/acceptor) is an active-site residue.

The protein belongs to the peptidase M14 family. Homodimer. The cofactor is Zn(2+).

Its subcellular location is the cytoplasm. It carries out the reaction L-alanyl-gamma-D-glutamyl-meso-2,6-diaminopimelate + H2O = L-alanyl-D-glutamate + meso-2,6-diaminopimelate. It functions in the pathway cell wall degradation; peptidoglycan degradation. In terms of biological role, involved in muropeptide degradation. Catalyzes the hydrolysis of the gamma-D-glutamyl-diaminopimelic acid (gamma-D-Glu-Dap) amide bond in the murein tripeptide L-alanyl-gamma-D-glutamyl-meso-diaminopimelic acid, leading to the formation of L-Ala-gamma-D-Glu and Dap. This Escherichia coli O157:H7 protein is Murein peptide amidase A.